A 148-amino-acid chain; its full sequence is Hemoglobin subunit beta-B (148 aa).

In terms of domain architecture, Globin spans 3-148 (DWTDAERAAI…VVSALGRQYH (146 aa)). H64 and H93 together coordinate heme b.

Belongs to the globin family. Heterotetramer of two alpha chains and two beta chains. Red blood cells.

In terms of biological role, involved in oxygen transport from gills to the various peripheral tissues. This chain is Hemoglobin subunit beta-B (hbb2), found in Seriola quinqueradiata (Five-ray yellowtail).